Here is a 347-residue protein sequence, read N- to C-terminus: uncharacterized protein (347 aa).

This is an uncharacterized protein from Caenorhabditis elegans.